Reading from the N-terminus, the 397-residue chain is Tryptophan synthase beta chain (397 aa).

The residue at position 87 (K87) is an N6-(pyridoxal phosphate)lysine.

The protein belongs to the TrpB family. Tetramer of two alpha and two beta chains. Pyridoxal 5'-phosphate serves as cofactor.

It catalyses the reaction (1S,2R)-1-C-(indol-3-yl)glycerol 3-phosphate + L-serine = D-glyceraldehyde 3-phosphate + L-tryptophan + H2O. It participates in amino-acid biosynthesis; L-tryptophan biosynthesis; L-tryptophan from chorismate: step 5/5. The beta subunit is responsible for the synthesis of L-tryptophan from indole and L-serine. The chain is Tryptophan synthase beta chain from Shigella boydii serotype 18 (strain CDC 3083-94 / BS512).